The following is a 1222-amino-acid chain: Serine/threonine-protein kinase WNK4 (1222 aa).

Positions 1–17 (MLAPRNTETGVHMSQTE) are enriched in polar residues. Residues 1–163 (MLAPRNTETG…KEDTETQAVA (163 aa)) form a disordered region. At serine 95 the chain carries Phosphoserine. Residues 135–152 (EPPRVPDAAARERRREQE) show a composition bias toward basic and acidic residues. Residues lysine 154 and lysine 172 each participate in a glycyl lysine isopeptide (Lys-Gly) (interchain with G-Cter in ubiquitin) cross-link. One can recognise a Protein kinase domain in the interval 171 to 429 (LKFDIEIGRG…IQDLLTHAFF (259 aa)). Serine 181 contacts ATP. Residues lysine 183, lysine 223, and lysine 238 each participate in a glycyl lysine isopeptide (Lys-Gly) (interchain with G-Cter in ubiquitin) cross-link. ATP-binding positions include 251–254 (TELM) and lysine 301. The Proton acceptor role is filled by aspartate 318. Lysine 325 is covalently cross-linked (Glycyl lysine isopeptide (Lys-Gly) (interchain with G-Cter in ubiquitin)). Phosphoserine; by autocatalysis occurs at positions 328 and 332. Residues lysine 384, lysine 390, lysine 447, and lysine 451 each participate in a glycyl lysine isopeptide (Lys-Gly) (interchain with G-Cter in ubiquitin) cross-link. Residues 527–562 (LEVLPPDSGPPPATVSMTPGPPSAFPPEPEEPEADQ) form a disordered region. Residues 533-553 (DSGPPPATVSMTPGPPSAFPP) are compositionally biased toward pro residues. The interval 554–564 (EPEEPEADQHQ) is interaction with KLHL3. At serine 572 the chain carries Phosphoserine. 5 disordered regions span residues 591 to 612 (FLDASDPALQPPGGMPSSPAEP), 626 to 679 (RSGP…SVSD), 747 to 809 (DAGP…GTPF), 836 to 873 (QVSSNPCPQAPSSLLPSSSGASQVPFPSPSLPTSSPLP), and 927 to 1087 (SPGL…QPSP). A compositionally biased stretch (low complexity) spans 627 to 638 (SGPGSDFSPGDS). The segment covering 659–672 (NPVKTLRRRPRSRL) has biased composition (basic residues). Low complexity-rich tracts occupy residues 792–809 (FSTSPSSPGTPLSPGTPF) and 845–873 (APSSLLPSSSGASQVPFPSPSLPTSSPLP). The segment covering 935–946 (PPAPPGPLPSMP) has biased composition (pro residues). Over residues 953 to 963 (DQESLSAQTAE) the composition is skewed to polar residues. Lysine 990 participates in a covalent cross-link: Glycyl lysine isopeptide (Lys-Gly) (interchain with G-Cter in ubiquitin). Positions 996–999 (RFQV) match the RFXV motif motif. The residue at position 1014 (serine 1014) is a Phosphoserine. The segment covering 1044–1056 (ETREALAESDRAA) has biased composition (basic and acidic residues). The segment covering 1076-1086 (GGSSPILSQPS) has biased composition (polar residues). Residues lysine 1123, lysine 1136, and lysine 1137 each participate in a glycyl lysine isopeptide (Lys-Gly) (interchain with G-Cter in ubiquitin) cross-link. The disordered stretch occupies residues 1169 to 1222 (SKGSFPTSRRNSLQRSDLPGPGIMRRNSLSGSSTGSQEQRASKGVTFAGDVGRM). Composition is skewed to polar residues over residues 1172–1183 (SFPTSRRNSLQR) and 1195–1207 (NSLSGSSTGSQEQ). Serine 1196 carries the post-translational modification Phosphoserine.

This sequence belongs to the protein kinase superfamily. Ser/Thr protein kinase family. WNK subfamily. In terms of assembly, interacts with the C-terminal region of KCNJ1. Interacts with WNK1 and WNK3. Interacts with KLHL3. Requires Mg(2+) as cofactor. In terms of processing, autophosphorylated at Ser-328 and Ser-332, promoting its activation. Phosphorylated by WNK1 and WNK3. Phosphorylated at Ser-572 in a MAP3K15/ASK3-dependent process in response to osmotic stress or hypotonic low-chloride stimulation. Ubiquitinated by the BCR(KLHL3) complex, leading to its degradation. Also ubiquitinated by the BCR(KLHL2) complex.

The protein resides in the cell junction. It is found in the tight junction. The catalysed reaction is L-seryl-[protein] + ATP = O-phospho-L-seryl-[protein] + ADP + H(+). It carries out the reaction L-threonyl-[protein] + ATP = O-phospho-L-threonyl-[protein] + ADP + H(+). With respect to regulation, activation requires autophosphorylation of Ser-328 and Ser-332. Autophosphorylation and subsequent activation is inhibited by increases in intracellular ionic strength: Cl(-) potently inhibits WNK4 kinase activity via direct binding. Also inhibited by K(+) ions. Serine/threonine-protein kinase component of the WNK4-SPAK/OSR1 kinase cascade, which acts as a key regulator of ion transport in the distal nephron and blood pressure. The WNK4-SPAK/OSR1 kinase cascade is composed of WNK4, which mediates phosphorylation and activation of downstream kinases OXSR1/OSR1 and STK39/SPAK. Following activation, OXSR1/OSR1 and STK39/SPAK catalyze phosphorylation of ion cotransporters, such as SLC12A1/NKCC2, SLC12A2/NKCC1, SLC12A3/NCC, SLC12A5/KCC2 or SLC12A6/KCC3, regulating their activity. Acts as a molecular switch that regulates the balance between renal salt reabsorption and K(+) secretion by modulating the activities of renal transporters and channels, including the Na-Cl cotransporter SLC12A3/NCC and the K(+) channel, KCNJ1/ROMK. Regulates NaCl reabsorption in the distal nephron by activating the thiazide-sensitive Na-Cl cotransporter SLC12A3/NCC in distal convoluted tubule cells of kidney: activates SLC12A3/NCC in a OXSR1/OSR1- and STK39/SPAK-dependent process. Also acts as a scaffold protein independently of its protein kinase activity: negatively regulates cell membrane localization of various transporters and channels (CFTR, KCNJ1/ROMK, SLC4A4, SLC26A9 and TRPV4) by clathrin-dependent endocytosis. Also inhibits the activity of the epithelial Na(+) channel (ENaC) SCNN1A, SCNN1B, SCNN1D in a inase-independent mechanism. May also phosphorylate NEDD4L. The protein is Serine/threonine-protein kinase WNK4 of Rattus norvegicus (Rat).